Consider the following 542-residue polypeptide: Hydroxylamine reductase (542 aa).

[4Fe-4S] cluster-binding residues include Cys-3, Cys-6, Cys-15, and Cys-21. Hybrid [4Fe-2O-2S] cluster-binding residues include His-238, Glu-262, Cys-307, Cys-398, Cys-426, Cys-451, Glu-485, and Lys-487. A Cysteine persulfide modification is found at Cys-398.

This sequence belongs to the HCP family. It depends on [4Fe-4S] cluster as a cofactor. The cofactor is hybrid [4Fe-2O-2S] cluster.

Its subcellular location is the cytoplasm. It carries out the reaction A + NH4(+) + H2O = hydroxylamine + AH2 + H(+). Its function is as follows. Catalyzes the reduction of hydroxylamine to form NH(3) and H(2)O. This is Hydroxylamine reductase from Microcystis aeruginosa (strain NIES-843 / IAM M-2473).